The chain runs to 156 residues: Anaerobic ribonucleoside-triphosphate reductase-activating protein (156 aa).

Cysteine 26, cysteine 30, and cysteine 33 together coordinate [4Fe-4S] cluster. S-adenosyl-L-methionine contacts are provided by residues glycine 32–tyrosine 34 and glycine 72.

It belongs to the organic radical-activating enzymes family. As to quaternary structure, forms a tetramer composed of two NrdD and two NrdG subunits. Requires [4Fe-4S] cluster as cofactor.

It catalyses the reaction glycyl-[protein] + reduced [flavodoxin] + S-adenosyl-L-methionine = glycin-2-yl radical-[protein] + semiquinone [flavodoxin] + 5'-deoxyadenosine + L-methionine + H(+). Its function is as follows. Activation of anaerobic ribonucleoside-triphosphate reductase under anaerobic conditions by generation of an organic free radical, using S-adenosylmethionine and reduced flavodoxin as cosubstrates to produce 5'-deoxy-adenosine. The polypeptide is Anaerobic ribonucleoside-triphosphate reductase-activating protein (NRDG) (Escherichia coli (Bacteriophage T4)).